The sequence spans 184 residues: uncharacterized protein (184 aa).

The chain crosses the membrane as a helical span at residues 35–55 (LSFLIYILYTFSISGLSTFVI).

The protein resides in the membrane. This is an uncharacterized protein from Schizosaccharomyces pombe (strain 972 / ATCC 24843) (Fission yeast).